We begin with the raw amino-acid sequence, 258 residues long: Protein IMPACT homolog (258 aa).

The RWD domain maps to 10–114 (EELEAVEAIY…TELDGVLYVE (105 aa)). A Glycyl lysine isopeptide (Lys-Gly) (interchain with G-Cter in ubiquitin) cross-link involves residue Lys-187.

Belongs to the IMPACT family. Interacts (via N-terminus) with GCN1 (via C-terminus); this interaction reduces the GCN1-GCN20 complex formation and prevents the interaction of GCN1 with GCN2 protein kinase and GCN2 activation in amino acid-starved cells. Interacts (via C-terminus) with ACT1; this interaction occurs in a GCN1-independent manner. Interacts with RPL39; this interaction occurs in a GCN1-independent manner. Associates (via middle region) with ribosomes; this association occurs in a GCN1-independent manner and persists under amino acid starvation conditions.

The protein resides in the cytoplasm. It is found in the nucleus. Translational regulator that ensures constant high levels of translation under amino acid starvation. Plays a role as a negative regulator of the GCN2 kinase activity; impairs GCN1-mediated GCN2 activation, and hence GCN2-mediated eIF-2-alpha phosphorylation in amino acid-starved cells and subsequent down-regulation of protein synthesis. In normal conditions, it resides in a actin complex and has no activity. The polypeptide is Protein IMPACT homolog (YIH1) (Saccharomyces cerevisiae (strain ATCC 204508 / S288c) (Baker's yeast)).